Consider the following 300-residue polypeptide: Tyrosine recombinase XerC (300 aa).

The region spanning 2–88 is the Core-binding (CB) domain; that stretch reads IQEGKLEQQF…SLRSFYTFLL (87 aa). Residues 109–294 enclose the Tyr recombinase domain; that stretch reads RLPKFFYSEE…TKEHLKSTYM (186 aa). Active-site residues include arginine 150, lysine 174, histidine 246, arginine 249, and histidine 272. Tyrosine 281 (O-(3'-phospho-DNA)-tyrosine intermediate) is an active-site residue.

The protein belongs to the 'phage' integrase family. XerC subfamily. Forms a cyclic heterotetrameric complex composed of two molecules of XerC and two molecules of XerD.

It localises to the cytoplasm. Functionally, site-specific tyrosine recombinase, which acts by catalyzing the cutting and rejoining of the recombining DNA molecules. The XerC-XerD complex is essential to convert dimers of the bacterial chromosome into monomers to permit their segregation at cell division. It also contributes to the segregational stability of plasmids. The chain is Tyrosine recombinase XerC from Listeria monocytogenes serotype 4b (strain F2365).